The primary structure comprises 604 residues: Serine/threonine-protein kinase A-Raf (604 aa).

Residues 19–91 (GTVKVYLPNK…DGEELIVEVL (73 aa)) form the RBD domain. The Phorbol-ester/DAG-type zinc-finger motif lies at 98–144 (MHNFVRKTFFSLAFCDFCLKFLFHGFRCQTCGYKFHQHCSSKVPTVC). Zn(2+) is bound by residues His99, Cys112, Cys115, Cys125, Cys128, His133, Cys136, and Cys144. Residues Ser157 and Ser162 each carry the phosphoserine modification. Disordered stretches follow at residues 178-222 (ELLT…HMVS) and 241-287 (TDAA…DEKK). Phosphothreonine is present on Thr181. Ser186 carries the post-translational modification Phosphoserine. Over residues 210 to 222 (IRSTSTPNVHMVS) the composition is skewed to polar residues. The span at 252 to 265 (PRGSPSPASVSSGR) shows a compositional bias: low complexity. Ser255 and Ser267 each carry phosphoserine. Over residues 272-287 (LPAEQRERKSLADEKK) the composition is skewed to basic and acidic residues. Residues 308–568 (VQLLKRIGTG…PQILATIELL (261 aa)) form the Protein kinase domain. Residues 314-322 (IGTGSFGTV) and Lys334 contribute to the ATP site. At Thr316 the chain carries Phosphothreonine. The Proton acceptor role is filled by Asp427.

The protein belongs to the protein kinase superfamily. TKL Ser/Thr protein kinase family. RAF subfamily. Interacts with TH1L/NELFD. Zn(2+) is required as a cofactor. Dephosphorylation by the SHOC2-MRAS-PP1c (SMP) complex consisting of SHOC2, GTP-bound M-Ras/MRAS and the catalytic subunit of protein phosphatase 1 (PPP1CA, PPP1CB or PPP1CC); this relieves inactivation and stimulates kinase activity.

It catalyses the reaction L-seryl-[protein] + ATP = O-phospho-L-seryl-[protein] + ADP + H(+). The catalysed reaction is L-threonyl-[protein] + ATP = O-phospho-L-threonyl-[protein] + ADP + H(+). In terms of biological role, involved in the transduction of mitogenic signals from the cell membrane to the nucleus. May also regulate the TOR signaling cascade. Phosphorylates PFKFB2. The protein is Serine/threonine-protein kinase A-Raf (Araf) of Rattus norvegicus (Rat).